The primary structure comprises 145 residues: uncharacterized protein (145 aa).

The segment at 37 to 123 (GKGTNTAKSS…MDREASYFAP (87 aa)) is disordered. Residues 38-63 (KGTNTAKSSGGNNGTNLNAKRSNTTQ) show a composition bias toward polar residues.

This is an uncharacterized protein from Caenorhabditis elegans.